A 50-amino-acid polypeptide reads, in one-letter code: Putative protein HokF (50 aa).

Residues 5-25 (YALVAVIVLCLTVPGFTLLVG) traverse the membrane as a helical segment.

It belongs to the Hok/Gef family.

It localises to the cell inner membrane. Toxic component of a type I toxin-antitoxin (TA) system. When overexpressed kills cells within minutes; causes collapse of the transmembrane potential and arrest of respiration. Its toxic effect is probably neutralized by an antisense antitoxin Sok RNA. The chain is Putative protein HokF (hokF) from Escherichia coli O157:H7.